Here is a 341-residue protein sequence, read N- to C-terminus: Malate dehydrogenase 2, mitochondrial (341 aa).

The transit peptide at 1-22 (MFRSMIVRSASPVKQGLLRRGF) directs the protein to the mitochondrion. NAD(+) is bound by residues 36-42 (GAAGGIG) and Asp62. 2 residues coordinate substrate: Arg109 and Arg115. NAD(+) is bound by residues Asn122 and 145-147 (ISN). 2 residues coordinate substrate: Asn147 and Arg181. His205 functions as the Proton acceptor in the catalytic mechanism. Met256 provides a ligand contact to NAD(+).

Belongs to the LDH/MDH superfamily. MDH type 1 family. Homodimer. Expressed in rosette leaves at low levels.

It localises to the mitochondrion matrix. The enzyme catalyses (S)-malate + NAD(+) = oxaloacetate + NADH + H(+). Functionally, catalyzes a reversible NAD-dependent dehydrogenase reaction involved in central metabolism and redox homeostasis between organelle compartments. Required for carbon dioxide and energy partitioning in leaves. May limit photorespiration during the dark phase. Can convert 2-ketoglutarate to L-2-hydroxyglutarate in vitro. This chain is Malate dehydrogenase 2, mitochondrial, found in Arabidopsis thaliana (Mouse-ear cress).